The following is a 390-amino-acid chain: ATP phosphoribosyltransferase regulatory subunit (390 aa).

The protein belongs to the class-II aminoacyl-tRNA synthetase family. HisZ subfamily. Heteromultimer composed of HisG and HisZ subunits.

The protein localises to the cytoplasm. Its pathway is amino-acid biosynthesis; L-histidine biosynthesis; L-histidine from 5-phospho-alpha-D-ribose 1-diphosphate: step 1/9. Its function is as follows. Required for the first step of histidine biosynthesis. May allow the feedback regulation of ATP phosphoribosyltransferase activity by histidine. The chain is ATP phosphoribosyltransferase regulatory subunit from Nitrosomonas eutropha (strain DSM 101675 / C91 / Nm57).